A 911-amino-acid polypeptide reads, in one-letter code: Inter-alpha-trypsin inhibitor heavy chain H1 (911 aa).

An N-terminal signal peptide occupies residues 1 to 27 (MDGAMGPRGLLLCMYLVSLLILQAMPA). The propeptide occupies 28–34 (LGSATGR). The VIT domain occupies 37–166 (SSEKRQAVDT…KVTFQLTYEE (130 aa)). Cys60 is a glycosylation site (S-linked (Hex...) cysteine). Ser129 is subject to Phosphoserine. The Phagocytosis uptake signal signature appears at 181 to 184 (VKPK). 2 disulfides stabilise this stretch: Cys244–Cys247 and Cys268–Cys540. The N-linked (GlcNAc...) (complex) asparagine glycan is linked to Asn285. The region spanning 290 to 450 (NKNVVFVIDI…FNFLEVMSME (161 aa)) is the VWFA domain. The hyaluronan-binding stretch occupies residues 387–911 (SLPELSNHAS…YTDYIVPDIF (525 aa)). Residues Thr402 and Thr407 each carry the phosphothreonine modification. The N-linked (GlcNAc...) (complex) asparagine glycan is linked to Asn588. O-linked (GalNAc...) threonine glycosylation occurs at Thr653. At Asp672 the chain carries Aspartate 1-(chondroitin 4-sulfate)-ester. Positions 673–911 (PHFIIHVPQK…YTDYIVPDIF (239 aa)) are excised as a propeptide. Asn750 carries N-linked (GlcNAc...) asparagine glycosylation.

It belongs to the ITIH family. I-alpha-I plasma protease inhibitors are assembled from one or two heavy chains (HC) and one light chain, bikunin. Inter-alpha-inhibitor (I-alpha-I) is composed of ITIH1/HC1, ITIH2/HC2 and bikunin. Interacts with TNFAIP6 (via Link and CUB domains). In terms of processing, heavy chains are linked to bikunin via chondroitin 4-sulfate esterified to the alpha-carboxyl of the C-terminal aspartate after propeptide cleavage. Post-translationally, the S-linked glycan is composed of two 6-carbon sugars, possibly Glc or Gal.

Its subcellular location is the secreted. In terms of biological role, may act as a carrier of hyaluronan in serum or as a binding protein between hyaluronan and other matrix protein, including those on cell surfaces in tissues to regulate the localization, synthesis and degradation of hyaluronan which are essential to cells undergoing biological processes. Functionally, contains a potential peptide which could stimulate a broad spectrum of phagocytotic cells. The sequence is that of Inter-alpha-trypsin inhibitor heavy chain H1 (ITIH1) from Homo sapiens (Human).